The sequence spans 323 residues: 8-oxo-dGDP phosphatase NUDT18 (323 aa).

Residues 37–167 (RLRKNVCYVV…DVLHLVELGA (131 aa)) form the Nudix hydrolase domain. Residue Leu-58 coordinates Mg(2+). A Nudix box motif is present at residues 76–97 (GRMEPGETIVEAMQREVKEEAG).

The protein belongs to the Nudix hydrolase family. Mn(2+) is required as a cofactor. Requires Mg(2+) as cofactor.

It catalyses the reaction 8-oxo-dGDP + H2O = 8-oxo-dGMP + phosphate + H(+). The catalysed reaction is 8-oxo-dADP + H2O = 8-oxo-dAMP + phosphate + H(+). It carries out the reaction 2-oxo-dADP + H2O = 2-oxo-dAMP + phosphate + H(+). The enzyme catalyses 8-oxo-GDP + H2O = 8-oxo-GMP + phosphate + H(+). Its function is as follows. Mediates the hydrolysis of oxidized nucleoside diphosphate derivatives. Hydrolyzes 8-oxo-7,8-dihydroguanine (8-oxo-Gua)-containing deoxyribo- and ribonucleoside diphosphates to the monophosphates. Hydrolyzes 8-oxo-dGDP and 8-oxo-GDP with the same efficiencies. Also hydrolyzes 8-OH-dADP and 2-OH-dADP. Exhibited no or minimal hydrolysis activity against 8-oxo-dGTP, 8-oxo-GTP, dGTP, GTP, dGDP and GDP. Probably removes oxidized guanine nucleotides from both the DNA and RNA precursor pools. In Mus musculus (Mouse), this protein is 8-oxo-dGDP phosphatase NUDT18.